The following is a 332-amino-acid chain: Methionine synthase (332 aa).

Zn(2+) is bound by residues His211, Cys213, and Cys296.

Belongs to the archaeal MetE family. It depends on Zn(2+) as a cofactor.

Its pathway is amino-acid biosynthesis; L-methionine biosynthesis via de novo pathway. Catalyzes the transfer of a methyl group to L-homocysteine resulting in methionine formation. The physiological methyl donor is unknown. The chain is Methionine synthase from Saccharolobus solfataricus (strain ATCC 35092 / DSM 1617 / JCM 11322 / P2) (Sulfolobus solfataricus).